Consider the following 416-residue polypeptide: 3-oxoacyl-[acyl-carrier-protein] synthase 1 (416 aa).

Residues 11 to 415 (FPSVVVTAVT…GHNVALAFGR (405 aa)) enclose the Ketosynthase family 3 (KS3) domain. Active-site for beta-ketoacyl synthase activity residues include C171, H311, and H345. Substrate contacts are provided by H311 and H345.

This sequence belongs to the thiolase-like superfamily. Beta-ketoacyl-ACP synthases family.

The protein localises to the cytoplasm. It carries out the reaction an ultra-long-chain mono-unsaturated fatty acyl-[ACP] + malonyl-[ACP] + H(+) = a 3-oxo-ultra-long-chain mono-unsaturated fatty acyl-[ACP] + holo-[ACP] + CO2. It functions in the pathway lipid metabolism; mycolic acid biosynthesis. In terms of biological role, part of the mycobacterial fatty acid elongation system FAS-II, which is involved in mycolic acid biosynthesis. Catalyzes the elongation of long chain acyl-ACP substrates by the addition of two carbons from malonyl-ACP to an acyl acceptor. Involved in the initial extension of the mycolate chain and forms monounsaturated fatty acids that averaged 40 carbons in length. In Mycobacterium leprae (strain TN), this protein is 3-oxoacyl-[acyl-carrier-protein] synthase 1 (kasA).